Reading from the N-terminus, the 436-residue chain is T-box transcription factor TBX6 (436 aa).

Residues 100 to 273 (LWKEFSAVGT…ANPFAKGFRE (174 aa)) constitute a DNA-binding region (T-box). Residues 274 to 284 (NGRNCKRERDA) show a composition bias toward basic and acidic residues. Disordered regions lie at residues 274-344 (NGRN…CGGP) and 360-383 (PSHL…APYS). Over residues 332–344 (EAASASAPPCGGP) the composition is skewed to low complexity.

Its subcellular location is the nucleus. Functionally, T-box transcription factor that plays an essential role in the determination of the fate of axial stem cells: neural vs mesodermal. Acts in part by down-regulating, a specific enhancer (N1) of SOX2, to inhibit neural development. Seems to play also an essential role in left/right axis determination and acts through effects on Notch signaling around the node as well as through an effect on the morphology and motility of the nodal cilia. This Mus musculus (Mouse) protein is T-box transcription factor TBX6 (Tbx6).